Consider the following 116-residue polypeptide: Large ribosomal subunit protein bL19 (116 aa).

The protein belongs to the bacterial ribosomal protein bL19 family.

This protein is located at the 30S-50S ribosomal subunit interface and may play a role in the structure and function of the aminoacyl-tRNA binding site. The sequence is that of Large ribosomal subunit protein bL19 from Histophilus somni (strain 129Pt) (Haemophilus somnus).